A 374-amino-acid chain; its full sequence is Transcription factor IIIA (374 aa).

7 C2H2-type zinc fingers span residues 23–47 (FHCPYEECGKKYSRPSLLEQHLRTH), 53–77 (FVCDYTGCSKAFYRKSHLKIHKRCH), 83–107 (FSCHYDGCDAQFYTQQHLERHIEVH), 113–138 (YACTWEGCDECFSKHQQLRSHISACH), 144–169 (YPCTYQDCELRFATKQKLQNHVNRAH), 204–226 (PSCSICGRQFKTAAHLRHHVVLH), and 236–261 (YHCPMEGCKKSFTRSSALKKHISVIH). The C2H2-type 8; atypical zinc-finger motif lies at 267–291 (FHCDSCGTKFGYKHMLQRHLERGTC). Residues 349–374 (YSCSFPECNYRFKRLYDMHRHLNSHH) form a C2H2-type 9 zinc finger.

It localises to the nucleus. Its function is as follows. Is required for correct transcription of 5S RNA genes by RNA polymerase III. Also binds the transcribed 5S RNA's. Initiates transcription of the 5S ribosomal RNA gene. This Schizosaccharomyces pombe (strain 972 / ATCC 24843) (Fission yeast) protein is Transcription factor IIIA (sfc2).